Consider the following 176-residue polypeptide: Tubulin polymerization-promoting protein family member 3 (176 aa).

Residue A2 is modified to N-acetylalanine.

The protein belongs to the TPPP family.

The protein resides in the cytoplasm. It localises to the cytoskeleton. In terms of biological role, regulator of microtubule dynamic that has microtubule bundling activity. Required for embryo implantation; possibly by regulating beta-catenin. Also required for decidualization via regulation of beta-catenin. The polypeptide is Tubulin polymerization-promoting protein family member 3 (Tppp3) (Rattus norvegicus (Rat)).